The sequence spans 142 residues: Large ribosomal subunit protein uL13 (142 aa).

The protein belongs to the universal ribosomal protein uL13 family. In terms of assembly, part of the 50S ribosomal subunit.

In terms of biological role, this protein is one of the early assembly proteins of the 50S ribosomal subunit, although it is not seen to bind rRNA by itself. It is important during the early stages of 50S assembly. This is Large ribosomal subunit protein uL13 from Pseudomonas fluorescens (strain ATCC BAA-477 / NRRL B-23932 / Pf-5).